A 448-amino-acid polypeptide reads, in one-letter code: MSLIASDHFRIVVGLGKSGMSLVRFLANRGVAFAVADTRENPPELATLQRDYPHVEVRCGELDVEFLCRADELYVSPGLALATPALQAAAARGVKLSGDIELFARNAKAPIVAISGSNAKSTVTTLVGEMAAAAGKRVAVGGNLGTPALDLLSDDVELYVMELSSFQLETTDQLNAEVATVLNISEDHMDRYSGLPAYHLAKHRIFRGAKQFVVNRQDALTRPLMGEGQPCWTFGLSKPDFKAFGLREENGEKYLAFEFQNLMPVRELKIRGAHNQSNALAALALGHAVGLPFDAMLVALRTFAGLEHRCQWVRDLDGVGYYNDSKATNVGAALAAIEGLGADIDGKVVLIAGGDGKGAEFKDLRDPVATHCRAVILMGRDSDKIGEAIGDAVPLIRATTLVDAVAQCRAAAQPGDVVLLSPACASFDMFNNYEDRGHQFVRAVEDLA.

An ATP-binding site is contributed by 116 to 122; that stretch reads GSNAKST.

The protein belongs to the MurCDEF family.

The protein resides in the cytoplasm. It catalyses the reaction UDP-N-acetyl-alpha-D-muramoyl-L-alanine + D-glutamate + ATP = UDP-N-acetyl-alpha-D-muramoyl-L-alanyl-D-glutamate + ADP + phosphate + H(+). Its pathway is cell wall biogenesis; peptidoglycan biosynthesis. Cell wall formation. Catalyzes the addition of glutamate to the nucleotide precursor UDP-N-acetylmuramoyl-L-alanine (UMA). The protein is UDP-N-acetylmuramoylalanine--D-glutamate ligase of Pseudomonas fluorescens (strain Pf0-1).